Here is a 467-residue protein sequence, read N- to C-terminus: Histone acetyltransferase type B catalytic subunit (467 aa).

Residues 1-24 form a disordered region; it reads MVQKQQASAGPGTEPKKRRRVGFS. Acetyl-CoA-binding positions include 249-251 and 256-262; these read ILV and QGKGLGS. E283 (proton donor/acceptor) is an active-site residue.

It belongs to the HAT1 family.

The protein resides in the nucleus. Its subcellular location is the cytoplasm. The catalysed reaction is L-lysyl-[protein] + acetyl-CoA = N(6)-acetyl-L-lysyl-[protein] + CoA + H(+). In terms of biological role, acetylates soluble but not nucleosomal H4. Acetylates 'Lys-12' of histone H4. The protein is Histone acetyltransferase type B catalytic subunit (HAG2) of Arabidopsis thaliana (Mouse-ear cress).